A 272-amino-acid chain; its full sequence is Glutamate 5-kinase (272 aa).

Residue Lys-15 coordinates ATP. Positions 55, 142, and 158 each coordinate substrate. ATP is bound by residues 178–179 (SD) and 220–226 (TGGMLSK).

Belongs to the glutamate 5-kinase family.

The protein localises to the cytoplasm. It carries out the reaction L-glutamate + ATP = L-glutamyl 5-phosphate + ADP. It participates in amino-acid biosynthesis; L-proline biosynthesis; L-glutamate 5-semialdehyde from L-glutamate: step 1/2. In terms of biological role, catalyzes the transfer of a phosphate group to glutamate to form L-glutamate 5-phosphate. The sequence is that of Glutamate 5-kinase from Streptococcus equi subsp. zooepidemicus (strain H70).